The sequence spans 240 residues: ATP-dependent dethiobiotin synthetase BioD (240 aa).

15-20 serves as a coordination point for ATP; the sequence is EIGKTF. Thr19 provides a ligand contact to Mg(2+). The active site involves Lys40. Residues Asp57, 118-121, and 178-179 each bind ATP; these read EGVG and NR. Mg(2+)-binding residues include Asp57 and Glu118.

The protein belongs to the dethiobiotin synthetase family. As to quaternary structure, homodimer. Requires Mg(2+) as cofactor.

The protein resides in the cytoplasm. It carries out the reaction (7R,8S)-7,8-diammoniononanoate + CO2 + ATP = (4R,5S)-dethiobiotin + ADP + phosphate + 3 H(+). It functions in the pathway cofactor biosynthesis; biotin biosynthesis; biotin from 7,8-diaminononanoate: step 1/2. Its function is as follows. Catalyzes a mechanistically unusual reaction, the ATP-dependent insertion of CO2 between the N7 and N8 nitrogen atoms of 7,8-diaminopelargonic acid (DAPA, also called 7,8-diammoniononanoate) to form a ureido ring. The chain is ATP-dependent dethiobiotin synthetase BioD from Burkholderia pseudomallei (strain K96243).